The chain runs to 322 residues: Ribonuclease Z (322 aa).

Residues H60, H62, D64, H65, H140, D210, and H270 each coordinate Zn(2+). The Proton acceptor role is filled by D64.

It belongs to the RNase Z family. As to quaternary structure, homodimer. Zn(2+) serves as cofactor.

It carries out the reaction Endonucleolytic cleavage of RNA, removing extra 3' nucleotides from tRNA precursor, generating 3' termini of tRNAs. A 3'-hydroxy group is left at the tRNA terminus and a 5'-phosphoryl group is left at the trailer molecule.. Zinc phosphodiesterase, which displays some tRNA 3'-processing endonuclease activity. Probably involved in tRNA maturation, by removing a 3'-trailer from precursor tRNA. The polypeptide is Ribonuclease Z (Methanococcus aeolicus (strain ATCC BAA-1280 / DSM 17508 / OCM 812 / Nankai-3)).